Consider the following 68-residue polypeptide: Protease A inhibitor 3 (68 aa).

Methionine 1 is modified (N-acetylmethionine). A compositionally biased stretch (polar residues) spans 1–14 (MNTDQQKVSEIFQS). Disordered regions lie at residues 1–21 (MNTD…KLQG) and 33–68 (MASQ…HKKE). The inhibitory domain stretch occupies residues 1-32 (MNTDQQKVSEIFQSSKEKLQGDAKVVSDAFKK). Over residues 33–53 (MASQDKDGKTTDADESEKHNY) the composition is skewed to basic and acidic residues.

This sequence belongs to the protease inhibitor I34 family.

Functionally, specific and potent inhibitor for yeast aspartic protease A (yscA). The proteinase acts as a folding template stabilizing the helical conformation in the inhibitor, which results in the potent and specific blockage of the proteolytic activity. In Saccharomyces cerevisiae (strain ATCC 204508 / S288c) (Baker's yeast), this protein is Protease A inhibitor 3 (PAI3).